We begin with the raw amino-acid sequence, 306 residues long: uncharacterized protein (306 aa).

The protein to L.delbrueckii similar ORF in glnA 5'region.

This is an uncharacterized protein from Lactobacillus delbrueckii subsp. bulgaricus.